We begin with the raw amino-acid sequence, 201 residues long: Ribonuclease HII (201 aa).

Residues 12 to 201 (DLVAGVDEVG…VRELLDVPVQ (190 aa)) enclose the RNase H type-2 domain. 3 residues coordinate a divalent metal cation: Asp-18, Glu-19, and Asp-110.

It belongs to the RNase HII family. Mn(2+) is required as a cofactor. Requires Mg(2+) as cofactor.

Its subcellular location is the cytoplasm. It catalyses the reaction Endonucleolytic cleavage to 5'-phosphomonoester.. Endonuclease that specifically degrades the RNA of RNA-DNA hybrids. This chain is Ribonuclease HII, found in Pseudomonas aeruginosa (strain UCBPP-PA14).